A 632-amino-acid polypeptide reads, in one-letter code: tRNA uridine 5-carboxymethylaminomethyl modification enzyme MnmG (632 aa).

FAD-binding positions include G13–G18, V125, and S180. Residue G273 to F287 participates in NAD(+) binding. Residue Q370 participates in FAD binding.

This sequence belongs to the MnmG family. In terms of assembly, homodimer. Heterotetramer of two MnmE and two MnmG subunits. The cofactor is FAD.

Its subcellular location is the cytoplasm. NAD-binding protein involved in the addition of a carboxymethylaminomethyl (cmnm) group at the wobble position (U34) of certain tRNAs, forming tRNA-cmnm(5)s(2)U34. The polypeptide is tRNA uridine 5-carboxymethylaminomethyl modification enzyme MnmG (Shewanella sediminis (strain HAW-EB3)).